A 549-amino-acid chain; its full sequence is FMRFamide receptor (549 aa).

The Extracellular segment spans residues 1 to 117 (MSGTAVARLL…NNRIEFWVCG (117 aa)). 3 N-linked (GlcNAc...) asparagine glycosylation sites follow: Asn-59, Asn-70, and Asn-93. A helical membrane pass occupies residues 118–138 (VLINIVGVLGILGNIISMIIL). At 139 to 158 (SRPQMRSSINYLLTGLARCD) the chain is on the cytoplasmic side. Residues 159-179 (TVLIITSILLFGIPSIYPYTG) traverse the membrane as a helical segment. Topologically, residues 180-181 (HF) are extracellular. The chain crosses the membrane as a helical span at residues 182–202 (FGYYNYVYPFISPAVFPIGMI). The Cytoplasmic portion of the chain corresponds to 203–238 (AQTASIYMTFTVTLERYVAVCHPLKARALCTYGRAK). The helical transmembrane segment at 239–259 (IYFIVCVCFSLAYNMPRFWEV) threads the bilayer. Over 260–289 (LTVTYPEPGKDVILHCVRPSRLRRSETYIN) the chain is Extracellular. The chain crosses the membrane as a helical span at residues 290-310 (IYIHWCYLIVNYIIPFLTLAI). Residues 311 to 341 (LNCLIYRQVKRANRERQRLSRSEKREIGLAT) lie on the Cytoplasmic side of the membrane. The chain crosses the membrane as a helical span at residues 342–362 (MLLCVVIVFFMLNFLPLVLNI). Residues 363 to 376 (SEAFYSTIDHKITK) are Extracellular-facing. The chain crosses the membrane as a helical span at residues 377–397 (ISNLLITINSSVNFLIYIIFG). Topologically, residues 398 to 549 (EKFKRIFLLI…KKLGHVSSGF (152 aa)) are cytoplasmic.

It belongs to the G-protein coupled receptor 1 family. In terms of tissue distribution, expressed in ovaries, heads and bodies. Expressed in dopaminergic neurons.

It localises to the cell membrane. In terms of biological role, a receptor for the FMRFamide peptides. Reacts with high affinity to FMRFamide and intrinsic FMRFamide-related peptides. By stimulating intracellular calcium signaling through the inositol 1,4,5-trisphosphate receptor, Itpr, in dopaminergic neurons, may be involved in the maintenance of neuronal excitability and in the regulation of flight bout duration. In Drosophila melanogaster (Fruit fly), this protein is FMRFamide receptor.